The chain runs to 239 residues: Lactate utilization protein A 1 (239 aa).

It belongs to the LutA/YkgE family.

In terms of biological role, is involved in L-lactate degradation and allows cells to grow with lactate as the sole carbon source. The protein is Lactate utilization protein A 1 of Bacillus anthracis (strain A0248).